Reading from the N-terminus, the 108-residue chain is MLKTTLLFFATALCEIVGCYLPWLWLKRGATPLLLIPTALALALFVWLLTLHPAASGRVYAAYGGVYVCTALLWLRVVDGVKLTHYDWAGAAIALCGMLIIVAGWGRA.

Helical transmembrane passes span 6–26 (LLFF…WLWL), 29–49 (GATP…VWLL), 61–81 (AAYG…VDGV), and 86–106 (YDWA…AGWG).

Belongs to the UPF0060 family.

Its subcellular location is the cell inner membrane. This chain is UPF0060 membrane protein KPN78578_15550, found in Klebsiella pneumoniae subsp. pneumoniae (strain ATCC 700721 / MGH 78578).